Consider the following 254-residue polypeptide: Alcohol dehydrogenase 1 (254 aa).

An NAD(+)-binding site is contributed by 10 to 33 (FVAGLGGIGFDTSREIVKKGPKNL). Residue serine 138 coordinates substrate. Catalysis depends on tyrosine 151, which acts as the Proton acceptor.

It belongs to the short-chain dehydrogenases/reductases (SDR) family. In terms of assembly, homodimer.

The enzyme catalyses a primary alcohol + NAD(+) = an aldehyde + NADH + H(+). It carries out the reaction a secondary alcohol + NAD(+) = a ketone + NADH + H(+). This chain is Alcohol dehydrogenase 1 (Adh1), found in Drosophila mojavensis (Fruit fly).